The following is a 189-amino-acid chain: NADH-quinone oxidoreductase subunit B (189 aa).

The [4Fe-4S] cluster site is built by C39, C40, C104, and C135.

Belongs to the complex I 20 kDa subunit family. In terms of assembly, NDH-1 is composed of 14 different subunits. Subunits NuoB, C, D, E, F, and G constitute the peripheral sector of the complex. [4Fe-4S] cluster is required as a cofactor.

The protein localises to the cell inner membrane. The enzyme catalyses a quinone + NADH + 5 H(+)(in) = a quinol + NAD(+) + 4 H(+)(out). In terms of biological role, NDH-1 shuttles electrons from NADH, via FMN and iron-sulfur (Fe-S) centers, to quinones in the respiratory chain. The immediate electron acceptor for the enzyme in this species is believed to be a menaquinone. Couples the redox reaction to proton translocation (for every two electrons transferred, four hydrogen ions are translocated across the cytoplasmic membrane), and thus conserves the redox energy in a proton gradient. The polypeptide is NADH-quinone oxidoreductase subunit B (Chlorobium phaeovibrioides (strain DSM 265 / 1930) (Prosthecochloris vibrioformis (strain DSM 265))).